Consider the following 466-residue polypeptide: Small RNA degrading nuclease 2 (466 aa).

In terms of domain architecture, Exonuclease spans 142–298; sequence MIAIDCEMVL…HDAEAAMKLV (157 aa). A disordered region spans residues 426–466; the sequence is EENNASSKKRKRENHSKGTRDRRRCKPLSRRKQRSNVKRRR. A compositionally biased stretch (basic residues) spans 445 to 466; the sequence is RDRRRCKPLSRRKQRSNVKRRR.

It belongs to the REXO1/REXO3 family.

It localises to the nucleus. Its function is as follows. 3'-5' exonuclease degrading single-stranded small RNAs. This Arabidopsis thaliana (Mouse-ear cress) protein is Small RNA degrading nuclease 2 (SDN2).